Reading from the N-terminus, the 110-residue chain is MLMLTSQTIDGKRISRYHGIVTGDALIGANIYKDIFSGVRDVVGGRTSAYERELARARELALSSMASAAERLGADAIIGVRLDYHNLGGTMGNTILVSTTGTAVSTEDEE.

This sequence belongs to the UPF0145 family.

This is UPF0145 protein MTH_507 from Methanothermobacter thermautotrophicus (strain ATCC 29096 / DSM 1053 / JCM 10044 / NBRC 100330 / Delta H) (Methanobacterium thermoautotrophicum).